The primary structure comprises 155 residues: Endoribonuclease YbeY (155 aa).

Residues histidine 114, histidine 118, and histidine 124 each coordinate Zn(2+).

It belongs to the endoribonuclease YbeY family. Requires Zn(2+) as cofactor.

It localises to the cytoplasm. Its function is as follows. Single strand-specific metallo-endoribonuclease involved in late-stage 70S ribosome quality control and in maturation of the 3' terminus of the 16S rRNA. The sequence is that of Endoribonuclease YbeY from Citrobacter koseri (strain ATCC BAA-895 / CDC 4225-83 / SGSC4696).